The chain runs to 146 residues: MDSRLSAAYAIRAARISMIPGGVDGLVINYAEGGEPAWVQYPLKKQKPLPNNLCYTPTLEDIARKREAVIAKYTKQPLETGTTFTHVLNASHLNEQYTRVKKSALPDKEFPIIETEKYPEPPILWETTIGAPSRLFDRSDGVKYVR.

In terms of assembly, interacts with the major capsid protein.

Its subcellular location is the virion. Its function is as follows. One of the minor capsid proteins that constitute a network internal to the major capsid proteins and outside the lipid membrane. The minor capsid proteins glue and stabilize the capsomers. The sequence is that of Minor capsid protein P5 from Paramecium bursaria Chlorella virus 1 (PBCV-1).